We begin with the raw amino-acid sequence, 374 residues long: 4-galactosyl-N-acetylglucosaminide 3-alpha-L-fucosyltransferase FUT5 (374 aa).

Residues 1-15 (MDLLGAAKPQWPWRR) lie on the Cytoplasmic side of the membrane. Residues 16 to 34 (CLAGLLFQLLVAVCFFSYL) form a helical; Signal-anchor for type II membrane protein membrane-spanning segment. Topologically, residues 35-374 (RVSRDDATGS…TVRSIAAWFN (340 aa)) are lumenal. Residues N60, N105, N167, and N198 are each glycosylated (N-linked (GlcNAc...) asparagine).

This sequence belongs to the glycosyltransferase 10 family.

Its subcellular location is the golgi apparatus. The protein resides in the golgi stack membrane. It carries out the reaction a beta-D-galactosyl-(1-&gt;3)-N-acetyl-beta-D-glucosaminyl derivative + GDP-beta-L-fucose = a beta-D-galactosyl-(1-&gt;3)-[alpha-L-fucosyl-(1-&gt;4)]-N-acetyl-beta-D-glucosaminyl derivative + GDP + H(+). It catalyses the reaction an N-acetyl-alpha-neuraminyl-(2-&gt;3)-beta-D-galactosyl-(1-&gt;4)-N-acetyl-beta-D-glucosaminyl derivative + GDP-beta-L-fucose = an alpha-Neu5Ac-(2-&gt;3)-beta-D-Gal-(1-&gt;4)-[alpha-L-Fuc-(1-&gt;3)]-beta-D-GlcNAc derivative + GDP + H(+). The enzyme catalyses an alpha-Neu5Ac-(2-&gt;3)-beta-D-Gal-(1-&gt;4)-beta-D-GlcNAc-(1-&gt;3)-beta-D-Gal-(1-&gt;4)-[alpha-L-Fuc-(1-&gt;3)]-beta-D-GlcNAc derivative + GDP-beta-L-fucose = an alpha-Neu5Ac-(2-&gt;3)-beta-D-Gal-(1-&gt;4)-[alpha-L-Fuc-(1-&gt;3)]-beta-D-GlcNAc-(1-&gt;3)-beta-D-Gal-(1-&gt;4)-[alpha-L-Fuc-(1-&gt;3)]-beta-D-GlcNAc derivative + GDP + H(+). The catalysed reaction is a beta-D-galactosyl-(1-&gt;4)-N-acetyl-beta-D-glucosaminyl derivative + GDP-beta-L-fucose = a beta-D-galactosyl-(1-&gt;4)-[alpha-L-fucosyl-(1-&gt;3)]-N-acetyl-beta-D-glucosaminyl derivative + GDP + H(+). It carries out the reaction a neolactoside nLc4Cer + GDP-beta-L-fucose = a neolactoside III(3)-alpha-Fuc-nLc4Cer + GDP + H(+). It catalyses the reaction a neolactoside nLc6Cer + GDP-beta-L-fucose = beta-D-galactosyl-(1-&gt;4)-N-acetyl-beta-D-glucosaminyl-(1-&gt;3)-beta-D-galactosyl-(1-&gt;4)-[alpha-L-fucosyl-(1-&gt;3)]-N-acetyl-beta-D-glucosaminyl-(1-&gt;3)-beta-D-galactosyl-(1-&gt;4)-beta-D-glucosyl-(1&lt;-&gt;1')-ceramide + GDP + H(+). The enzyme catalyses a neolactoside nLc6Cer(d18:1(4E)) + GDP-beta-L-fucose = a neolactoside III(3)-alpha-Fuc-nLc6Cer(d18:1(4E)) + GDP + H(+). The catalysed reaction is a neolactoside nLc4Cer(d18:1(4E)) + GDP-beta-L-fucose = a neolactoside III(3)-alpha-Fuc-nLc4Cer(d18:1(4E)) + GDP + H(+). It carries out the reaction a neolactoside VI(3)-alpha-NeuNAc-nLc6Cer + GDP-beta-L-fucose = a neolactoside VI(3)-alpha-NeuAc,III(3)-alphaFuc-nLc6Cer + GDP + H(+). It catalyses the reaction beta-D-galactosyl-(1-&gt;4)-N-acetyl-D-glucosamine + GDP-beta-L-fucose = beta-D-galactosyl-(1-&gt;4)-[alpha-L-fucosyl-(1-&gt;3)]-N-acetyl-D-glucosamine + GDP + H(+). The enzyme catalyses N-acetyl-alpha-neuraminosyl-(2-&gt;3)-beta-D-galactosyl-(1-&gt;4)-N-acetyl-beta-D-glucosamine + GDP-beta-L-fucose = N-acetyl-alpha-neuraminosyl-(2-&gt;3)-beta-D-galactosyl-(1-&gt;4)-[alpha-L-fucosyl-(1-&gt;3)]-N-acetyl-beta-D-glucosamine + GDP + H(+). The catalysed reaction is alpha-L-Fuc-(1-&gt;2)-beta-D-Gal-(1-&gt;4)-D-GlcNAc + GDP-beta-L-fucose = alpha-L-Fuc-(1-&gt;2)-beta-D-Gal-(1-&gt;4)-[alpha-L-Fuc-(1-&gt;3)]-D-GlcNAc + GDP + H(+). It carries out the reaction an alpha-Neu5Ac-(2-&gt;3)-beta-D-Gal-(1-&gt;3)-D-GlcNAc derivative + GDP-beta-L-fucose = an alpha-Neu5Ac-(2-&gt;3)-beta-D-Gal-(1-&gt;3)-[alpha-L-Fuc-(1-&gt;4)]-beta-D-GlcNAc derivative + GDP + H(+). Its pathway is protein modification; protein glycosylation. Catalyzes preferentially the transfer of L-fucose, from a guanosine diphosphate-beta-L-fucose, to the N-acetyl-beta-D-glucosamine (GlcNAc) of an N-acetyllactosamine unit (type 2 chain) of an oligosaccharide, or a glycoprotein- and a glycolipid-linked N-acetyllactosamine unit via an alpha (1,3) linkage and participates in the surface expression of VIM-2, Lewis X/SSEA-1 and sialyl Lewis X antigens. Preferentially transfers fucose to the GlcNAc of an internal N-acetyllactosamine unit of a poly-N-acetyllactosamine chain acceptor substrate. Also catalyzes to a lesser extend the transfer of L-fucose to the GlcNAc of a type 1 (beta-D-galactosyl-(1-&gt;3)-N-acetyl-beta-D-glucosaminyl) or H-type 1 (alpha-L-Fuc-(1-&gt;2)-beta-D-Gal-(1-&gt;3)-D-GlcNAc) chain oligosaccharide via an alpha (1,4) linkage. Preferentially catalyzes sialylated type 2 oligosaccharide acceptors over neutral type 2 or H type 2 (alpha-L-Fuc-(1-&gt;2)-beta-D-Gal-(1-&gt;4)-D-GlcNAc) oligosaccharide acceptors. Lactose-based structures are also acceptor substrates. This is 4-galactosyl-N-acetylglucosaminide 3-alpha-L-fucosyltransferase FUT5 from Hylobates lar (Lar gibbon).